The sequence spans 161 residues: RNA pyrophosphohydrolase (161 aa).

The Nudix hydrolase domain maps to 12-154; sequence PYRPGVGMMI…KRKLYQAVVK (143 aa). The Nudix box signature appears at 46 to 67; that stretch reads GGIVPGETPSIAAMREMLEEIG.

This sequence belongs to the Nudix hydrolase family. RppH subfamily. It depends on a divalent metal cation as a cofactor.

Functionally, accelerates the degradation of transcripts by removing pyrophosphate from the 5'-end of triphosphorylated RNA, leading to a more labile monophosphorylated state that can stimulate subsequent ribonuclease cleavage. This Rickettsia typhi (strain ATCC VR-144 / Wilmington) protein is RNA pyrophosphohydrolase.